The chain runs to 758 residues: 5-methyltetrahydropteroyltriglutamate--homocysteine methyltransferase (758 aa).

Residues 17–20 (RELK) and Lys-117 each bind 5-methyltetrahydropteroyltri-L-glutamate. L-homocysteine-binding positions include 434 to 436 (IGS) and Glu-487. Residues 434–436 (IGS) and Glu-487 contribute to the L-methionine site. 5-methyltetrahydropteroyltri-L-glutamate-binding positions include 518–519 (RC) and Trp-564. Asp-602 contacts L-homocysteine. Residue Asp-602 participates in L-methionine binding. Glu-608 lines the 5-methyltetrahydropteroyltri-L-glutamate pocket. 3 residues coordinate Zn(2+): His-644, Cys-646, and Glu-668. His-697 functions as the Proton donor in the catalytic mechanism. A Zn(2+)-binding site is contributed by Cys-729.

The protein belongs to the vitamin-B12 independent methionine synthase family. The cofactor is Zn(2+).

The catalysed reaction is 5-methyltetrahydropteroyltri-L-glutamate + L-homocysteine = tetrahydropteroyltri-L-glutamate + L-methionine. The protein operates within amino-acid biosynthesis; L-methionine biosynthesis via de novo pathway; L-methionine from L-homocysteine (MetE route): step 1/1. Functionally, catalyzes the transfer of a methyl group from 5-methyltetrahydrofolate to homocysteine resulting in methionine formation. This chain is 5-methyltetrahydropteroyltriglutamate--homocysteine methyltransferase, found in Yersinia pestis bv. Antiqua (strain Antiqua).